Here is a 479-residue protein sequence, read N- to C-terminus: MAQHTVYFPDAFLTQMREAMPSTLSFDDFLAACQRPLRRSIRVNTLKISVADFLQLTAPYGWTLTPIPWCEEGFWIERDNEDALPLGSTAEHLSGLFYIQEASSMLPVAALFADGNAPQRVMDVAAAPGSKTTQIAARMNNEGAILANEFSASRVKVLHANISRCGISNVALTHFDGRVFGAAVPEMFDAILLDAPCSGEGVVRKDPDALKNWSPESNQEIAATQRELIDSAFHALRPGGTLVYSTCTLNQEENEAVCLWLKETYPDAVEFLPLGDLFPGANKALTEEGFLHVFPQIYDCEGFFVARLRKTQAIPALPAPKYKVGNFPFSPVKDREAGQIRQAAAGVGLNWDENLRLWQRDKELWLFPVDIEALIGKVRFSRLGIKLAETHNKGYRWQHEAVIALATPDNVNAFELTPQEAEEWYRGRDVYPQAAPVADDVLVTFQHQPIGLAKRIGSRLKNSYPRELVRDGKLFTGNA.

Residues 125–131, E149, D176, and D194 contribute to the S-adenosyl-L-methionine site; that span reads AAAPGSK. The active-site Nucleophile is the C247.

This sequence belongs to the class I-like SAM-binding methyltransferase superfamily. RsmB/NOP family.

It localises to the cytoplasm. The catalysed reaction is cytidine(1407) in 16S rRNA + S-adenosyl-L-methionine = 5-methylcytidine(1407) in 16S rRNA + S-adenosyl-L-homocysteine + H(+). In terms of biological role, specifically methylates the cytosine at position 1407 (m5C1407) of 16S rRNA. The polypeptide is Ribosomal RNA small subunit methyltransferase F (Shigella boydii serotype 4 (strain Sb227)).